Reading from the N-terminus, the 328-residue chain is 4-hydroxythreonine-4-phosphate dehydrogenase (328 aa).

2 residues coordinate substrate: H130 and T131. 3 residues coordinate a divalent metal cation: H163, H208, and H263. Substrate-binding residues include K271, N280, and R289.

The protein belongs to the PdxA family. As to quaternary structure, homodimer. The cofactor is Zn(2+). Mg(2+) is required as a cofactor. Requires Co(2+) as cofactor.

It localises to the cytoplasm. It catalyses the reaction 4-(phosphooxy)-L-threonine + NAD(+) = 3-amino-2-oxopropyl phosphate + CO2 + NADH. It functions in the pathway cofactor biosynthesis; pyridoxine 5'-phosphate biosynthesis; pyridoxine 5'-phosphate from D-erythrose 4-phosphate: step 4/5. In terms of biological role, catalyzes the NAD(P)-dependent oxidation of 4-(phosphooxy)-L-threonine (HTP) into 2-amino-3-oxo-4-(phosphooxy)butyric acid which spontaneously decarboxylates to form 3-amino-2-oxopropyl phosphate (AHAP). The sequence is that of 4-hydroxythreonine-4-phosphate dehydrogenase from Burkholderia vietnamiensis (strain G4 / LMG 22486) (Burkholderia cepacia (strain R1808)).